The sequence spans 238 residues: Transcription factor PCL1 (238 aa).

The segment covering 71–90 (RLRRASSSSSSSFPAFASKG) has biased composition (low complexity). Residues 71–119 (RLRRASSSSSSSFPAFASKGAGTGADEAESGGGADGGNGNTNNSSSKRA) form a disordered region. The span at 100-109 (SGGGADGGNG) shows a compositional bias: gly residues. The myb-like GARP DNA-binding region spans 115–174 (SSKRARLVWTPQLHKRFVEVVAHLGMKNAVPKTIMQLMNVEGLTRENVASHLQKYRLYVK).

It localises to the nucleus. In terms of biological role, transcription factor that is essential for the generation of the circadian clock oscillation. Binds to specific sites on CCA1 promoter leading to CCA1 activation. In Oryza sativa subsp. japonica (Rice), this protein is Transcription factor PCL1 (PCL1).